The chain runs to 279 residues: Bifunctional protein FolD (279 aa).

Residues 165–167, Ser-190, and Ile-231 contribute to the NADP(+) site; that span reads GRS.

Belongs to the tetrahydrofolate dehydrogenase/cyclohydrolase family. As to quaternary structure, homodimer.

The catalysed reaction is (6R)-5,10-methylene-5,6,7,8-tetrahydrofolate + NADP(+) = (6R)-5,10-methenyltetrahydrofolate + NADPH. It carries out the reaction (6R)-5,10-methenyltetrahydrofolate + H2O = (6R)-10-formyltetrahydrofolate + H(+). It participates in one-carbon metabolism; tetrahydrofolate interconversion. Functionally, catalyzes the oxidation of 5,10-methylenetetrahydrofolate to 5,10-methenyltetrahydrofolate and then the hydrolysis of 5,10-methenyltetrahydrofolate to 10-formyltetrahydrofolate. The sequence is that of Bifunctional protein FolD from Halalkalibacterium halodurans (strain ATCC BAA-125 / DSM 18197 / FERM 7344 / JCM 9153 / C-125) (Bacillus halodurans).